A 123-amino-acid polypeptide reads, in one-letter code: 1,4-dihydroxy-2-naphthoyl-CoA hydrolase (123 aa).

E46 (nucleophile or proton acceptor) is an active-site residue.

This sequence belongs to the thioesterase PaaI family.

The enzyme catalyses 1,4-dihydroxy-2-naphthoyl-CoA + H2O = 1,4-dihydroxy-2-naphthoate + CoA + H(+). The protein operates within quinol/quinone metabolism; menaquinone biosynthesis. In terms of biological role, catalyzes the hydrolysis of 1,4-dihydroxy-2-naphthoyl-CoA (DHNA-CoA) to 1,4-dihydroxy-2-naphthoate (DHNA) and free coenzyme A. Production of DHNA is required for protection against bacteriolysis in the cytosol of macrophages and tissue-specific virulence in vivo, suggesting that MenI is required to protect the bacteria from killing in the macrophage cytosol. This is 1,4-dihydroxy-2-naphthoyl-CoA hydrolase from Listeria monocytogenes serotype 1/2a (strain 10403S).